Reading from the N-terminus, the 406-residue chain is Phosphopentomutase (406 aa).

D10, D305, H310, D346, H347, and H358 together coordinate Mn(2+).

The protein belongs to the phosphopentomutase family. Mn(2+) serves as cofactor.

It is found in the cytoplasm. It carries out the reaction 2-deoxy-alpha-D-ribose 1-phosphate = 2-deoxy-D-ribose 5-phosphate. The enzyme catalyses alpha-D-ribose 1-phosphate = D-ribose 5-phosphate. It functions in the pathway carbohydrate degradation; 2-deoxy-D-ribose 1-phosphate degradation; D-glyceraldehyde 3-phosphate and acetaldehyde from 2-deoxy-alpha-D-ribose 1-phosphate: step 1/2. Functionally, isomerase that catalyzes the conversion of deoxy-ribose 1-phosphate (dRib-1-P) and ribose 1-phosphate (Rib-1-P) to deoxy-ribose 5-phosphate (dRib-5-P) and ribose 5-phosphate (Rib-5-P), respectively. In Vibrio cholerae serotype O1 (strain ATCC 39315 / El Tor Inaba N16961), this protein is Phosphopentomutase.